Reading from the N-terminus, the 557-residue chain is Eudesmanediol synthase (557 aa).

Residues D310 and D314 each contribute to the Mg(2+) site. D310, D314, R450, and N453 together coordinate substrate. Positions D310–D314 match the DDXXD motif motif. Mg(2+) is bound by residues N453 and S457.

It belongs to the terpene synthase family. In terms of assembly, monomer. It depends on Mg(2+) as a cofactor. Mn(2+) serves as cofactor. In terms of tissue distribution, specifically expressed in roots.

It is found in the cytoplasm. It catalyses the reaction (2E,6E)-farnesyl diphosphate + 2 H2O = 7-epi-ent-eudesmane-5,11-diol + diphosphate. It functions in the pathway secondary metabolite biosynthesis; terpenoid biosynthesis. Component of the volatile terpenes biosynthesis pathways. Dihydroxylated sesquiterpenoid synthase that generates dually hydroxylated products directly from (E,E)-farnesyl diphosphate, primarily eudesmane-2,11-diol, along with two closely related structural isomers. This Zea mays (Maize) protein is Eudesmanediol synthase.